Here is a 105-residue protein sequence, read N- to C-terminus: Large ribosomal subunit protein bL21 (105 aa).

This sequence belongs to the bacterial ribosomal protein bL21 family. As to quaternary structure, part of the 50S ribosomal subunit. Contacts protein L20.

This protein binds to 23S rRNA in the presence of protein L20. The protein is Large ribosomal subunit protein bL21 of Rickettsia prowazekii (strain Madrid E).